The primary structure comprises 446 residues: NADH-quinone oxidoreductase subunit D (446 aa).

It belongs to the complex I 49 kDa subunit family. As to quaternary structure, NDH-1 is composed of 14 different subunits. Subunits NuoB, C, D, E, F, and G constitute the peripheral sector of the complex.

It localises to the cell membrane. The catalysed reaction is a quinone + NADH + 5 H(+)(in) = a quinol + NAD(+) + 4 H(+)(out). NDH-1 shuttles electrons from NADH, via FMN and iron-sulfur (Fe-S) centers, to quinones in the respiratory chain. The immediate electron acceptor for the enzyme in this species is believed to be a menaquinone. Couples the redox reaction to proton translocation (for every two electrons transferred, four hydrogen ions are translocated across the cytoplasmic membrane), and thus conserves the redox energy in a proton gradient. The sequence is that of NADH-quinone oxidoreductase subunit D from Nocardioides sp. (strain ATCC BAA-499 / JS614).